The following is a 912-amino-acid chain: Protein translocase subunit SecA (912 aa).

Residues glutamine 87, 105–109 (GEGKT), and aspartate 508 contribute to the ATP site. A disordered region spans residues 855–912 (QHQDAGGYGADEEVEQMQGGNAPVPVSQVTRDEPKVGRNDPCPCGSGKKYKHCHGQLS). Zn(2+) contacts are provided by cysteine 896, cysteine 898, cysteine 907, and histidine 908. Residues 902 to 912 (KKYKHCHGQLS) show a composition bias toward basic residues.

Belongs to the SecA family. Monomer and homodimer. Part of the essential Sec protein translocation apparatus which comprises SecA, SecYEG and auxiliary proteins SecDF-YajC and YidC. Requires Zn(2+) as cofactor.

The protein resides in the cell inner membrane. Its subcellular location is the cytoplasm. It carries out the reaction ATP + H2O + cellular proteinSide 1 = ADP + phosphate + cellular proteinSide 2.. Functionally, part of the Sec protein translocase complex. Interacts with the SecYEG preprotein conducting channel. Has a central role in coupling the hydrolysis of ATP to the transfer of proteins into and across the cell membrane, serving both as a receptor for the preprotein-SecB complex and as an ATP-driven molecular motor driving the stepwise translocation of polypeptide chains across the membrane. The chain is Protein translocase subunit SecA from Xanthomonas campestris pv. campestris (strain B100).